The primary structure comprises 130 residues: Small ribosomal subunit protein uS9 (130 aa).

Residues 101-110 show a composition bias toward basic and acidic residues; sequence AGFLTRDPRM. The segment at 101 to 130 is disordered; that stretch reads AGFLTRDPRMKERKKYGLKKARRAPQFSKR. Residues 111 to 130 are compositionally biased toward basic residues; it reads KERKKYGLKKARRAPQFSKR.

This sequence belongs to the universal ribosomal protein uS9 family.

The protein is Small ribosomal subunit protein uS9 of Clostridium tetani (strain Massachusetts / E88).